The primary structure comprises 142 residues: Large ribosomal subunit protein uL13 (142 aa).

This sequence belongs to the universal ribosomal protein uL13 family. As to quaternary structure, part of the 50S ribosomal subunit.

Its function is as follows. This protein is one of the early assembly proteins of the 50S ribosomal subunit, although it is not seen to bind rRNA by itself. It is important during the early stages of 50S assembly. The sequence is that of Large ribosomal subunit protein uL13 from Akkermansia muciniphila (strain ATCC BAA-835 / DSM 22959 / JCM 33894 / BCRC 81048 / CCUG 64013 / CIP 107961 / Muc).